The sequence spans 349 residues: Phosphoribosylformylglycinamidine cyclo-ligase (349 aa).

This sequence belongs to the AIR synthase family.

The protein resides in the cytoplasm. The catalysed reaction is 2-formamido-N(1)-(5-O-phospho-beta-D-ribosyl)acetamidine + ATP = 5-amino-1-(5-phospho-beta-D-ribosyl)imidazole + ADP + phosphate + H(+). Its pathway is purine metabolism; IMP biosynthesis via de novo pathway; 5-amino-1-(5-phospho-D-ribosyl)imidazole from N(2)-formyl-N(1)-(5-phospho-D-ribosyl)glycinamide: step 2/2. In Lawsonia intracellularis (strain PHE/MN1-00), this protein is Phosphoribosylformylglycinamidine cyclo-ligase.